The primary structure comprises 58 residues: UPF0391 membrane protein Shewmr4_2671 (58 aa).

Helical transmembrane passes span 6-26 (LMFLVVAIIAGLFGFTGIAGA) and 28-48 (AGIAKIIFFLFIVLLVISLLV).

The protein belongs to the UPF0391 family.

The protein resides in the cell membrane. The chain is UPF0391 membrane protein Shewmr4_2671 from Shewanella sp. (strain MR-4).